The primary structure comprises 339 residues: MSQEPEPGAMPYSPADDPSPLDLSLGSTSRRKKRKSHDIPNSPSKHPFPDGLSEEEKQKLERRRKRNRDAARRRRRKQTDYVDKLHEACEELQRANEHLRKEIRDLRTECTSLRVQLACHEPVCPMAVPLTVTLGLLTTPHDPVPEPPICTPPPPSPDEPNAPHCSGSQPPICTPPPPDTEELCAQLCSTPPPPISTPHIIYAPGPSPLQPPICTPAPPDAEELCAQLCSTPPPPICTPHSLFCPPQPPSPEGIFPALCPVTEPCTPPSPGTVYAQLCPVGQVPLFTPSPPHPAPEPERLYARLTEDPEQDSLYSGQIYTQFPSDTQSTVWWFPGDGRP.

The tract at residues 1-80 is disordered; the sequence is MSQEPEPGAM…ARRRRRKQTD (80 aa). Serine 42 bears the Phosphoserine; by host CDK2 mark. The segment at 57-84 is basic motif; that stretch reads KQKLERRRKRNRDAARRRRRKQTDYVDK. One can recognise a bZIP domain in the interval 57 to 120; that stretch reads KQKLERRRKR…TSLRVQLACH (64 aa). A compositionally biased stretch (basic residues) spans 60–77; sequence LERRRKRNRDAARRRRRK. The Nuclear localization signal signature appears at 62–78; that stretch reads RRRKRNRDAARRRRRKQ. The leucine-zipper stretch occupies residues 85–113; that stretch reads LHEACEELQRANEHLRKEIRDLRTECTSL. The transactivation domain stretch occupies residues 120-339; the sequence is HEPVCPMAVP…VWWFPGDGRP (220 aa). Residues 145–160 show a composition bias toward pro residues; the sequence is PEPPICTPPPPSPDEP. The tract at residues 145 to 172 is disordered; sequence PEPPICTPPPPSPDEPNAPHCSGSQPPI.

This sequence belongs to the bZIP family. Jun subfamily. As to quaternary structure, homodimer. Interacts with host JUN; this interaction allows MEQ to engage in host cell processes by disguising itself as a cellular JUN. Phosphorylated by host CDK2; this phosphorylation greatly reduces the DNA binding activity of MEQ.

It localises to the host nucleus. It is found in the host nucleolus. Its function is as follows. Functions as a DNA-binding transcription factor. Promotes transformation, host cell growth, host cell-cycle progression through G1/S phase, and possesses antiapoptotic activity. Forms functional heterodimers with host JUN. These heterodimers bind with high affinity DNA sequences called MEQ-responsive elements MERE I (TGACA/GTCA), while MEQ homodimers bind a second type of sites termed MERE II (ACACA). Both homo and heterodimerization of MEQ are required for oncogenesis. The sequence is that of Oncoprotein MEQ (MDV005) from Gallid herpesvirus 2 (strain Chicken/Md5/ATCC VR-987) (GaHV-2).